The following is a 214-amino-acid chain: ATP phosphoribosyltransferase (214 aa).

This sequence belongs to the ATP phosphoribosyltransferase family. Short subfamily. Heteromultimer composed of HisG and HisZ subunits.

It localises to the cytoplasm. It carries out the reaction 1-(5-phospho-beta-D-ribosyl)-ATP + diphosphate = 5-phospho-alpha-D-ribose 1-diphosphate + ATP. Its pathway is amino-acid biosynthesis; L-histidine biosynthesis; L-histidine from 5-phospho-alpha-D-ribose 1-diphosphate: step 1/9. Its function is as follows. Catalyzes the condensation of ATP and 5-phosphoribose 1-diphosphate to form N'-(5'-phosphoribosyl)-ATP (PR-ATP). Has a crucial role in the pathway because the rate of histidine biosynthesis seems to be controlled primarily by regulation of HisG enzymatic activity. The protein is ATP phosphoribosyltransferase of Leptothrix cholodnii (strain ATCC 51168 / LMG 8142 / SP-6) (Leptothrix discophora (strain SP-6)).